The primary structure comprises 326 residues: MTRFGLALLMILVIQGLVTFSEAQLKMGFYDQTCPYAEKIVQDVVNQHINNAPSLAAGLIRMHFHDCFVRGCDGSILINATSSNQQVEKLAPPNLTVRGFDFIDKVKSALESKCPGIVSCADIITLATRDSIVAIGGPTWNVPTGRRDGRISNFAEAMNNIPPPFGNFTTLITLFGNQGLDVKDLVLLSGAHTIGVSHCSSFSNRLFNFTGVGDQDPSLDSEYADNLKSRRCLSIADNTTKVEMDPGSRNTFDLSYYRLVLKRRGLFESDAALTMNPAALAQVKRFAGGSEQEFFAEFSNSMEKMGRIGVKTGSDGEIRRTCAFVN.

Residues 1–23 (MTRFGLALLMILVIQGLVTFSEA) form the signal peptide. 4 disulfide bridges follow: cysteine 34-cysteine 114, cysteine 67-cysteine 72, cysteine 120-cysteine 322, and cysteine 199-cysteine 232. Residue histidine 65 is the Proton acceptor of the active site. Ca(2+)-binding residues include aspartate 66, valine 69, glycine 71, aspartate 73, and serine 75. Asparagine 79 carries an N-linked (GlcNAc...) asparagine glycan. Position 162 (proline 162) interacts with substrate. A glycan (N-linked (GlcNAc...) asparagine) is linked at asparagine 167. Residue histidine 192 coordinates heme b. Threonine 193 is a Ca(2+) binding site. 2 N-linked (GlcNAc...) asparagine glycosylation sites follow: asparagine 208 and asparagine 238. Aspartate 245, serine 248, and aspartate 253 together coordinate Ca(2+).

This sequence belongs to the peroxidase family. Classical plant (class III) peroxidase subfamily. It depends on heme b as a cofactor. The cofactor is Ca(2+). In terms of tissue distribution, slightly expressed in roots.

It is found in the secreted. The catalysed reaction is 2 a phenolic donor + H2O2 = 2 a phenolic radical donor + 2 H2O. Functionally, removal of H(2)O(2), oxidation of toxic reductants, biosynthesis and degradation of lignin, suberization, auxin catabolism, response to environmental stresses such as wounding, pathogen attack and oxidative stress. These functions might be dependent on each isozyme/isoform in each plant tissue. In Arabidopsis thaliana (Mouse-ear cress), this protein is Peroxidase 39 (PER39).